The primary structure comprises 351 residues: DNA polymerase IV (351 aa).

The 182-residue stretch at 4-185 folds into the UmuC domain; the sequence is IIHVDMDCFF…LPLAKIPGVG (182 aa). Positions 8 and 103 each coordinate Mg(2+). E104 is a catalytic residue.

The protein belongs to the DNA polymerase type-Y family. In terms of assembly, monomer. Requires Mg(2+) as cofactor.

Its subcellular location is the cytoplasm. The catalysed reaction is DNA(n) + a 2'-deoxyribonucleoside 5'-triphosphate = DNA(n+1) + diphosphate. Its function is as follows. Poorly processive, error-prone DNA polymerase involved in untargeted mutagenesis. Copies undamaged DNA at stalled replication forks, which arise in vivo from mismatched or misaligned primer ends. These misaligned primers can be extended by PolIV. Exhibits no 3'-5' exonuclease (proofreading) activity. May be involved in translesional synthesis, in conjunction with the beta clamp from PolIII. This chain is DNA polymerase IV, found in Escherichia coli O157:H7.